The chain runs to 288 residues: Pteridine reductase 1 (288 aa).

17-40 provides a ligand contact to NADP(+); it reads RLGRSIAEGLHAEGYAVCLHYHRS. Ser175 lines the substrate pocket. The active-site Proton acceptor is the Tyr194.

Belongs to the short-chain dehydrogenases/reductases (SDR) family. In terms of assembly, homotetramer.

It catalyses the reaction (6R)-L-erythro-5,6,7,8-tetrahydrobiopterin + 2 NADP(+) = L-erythro-biopterin + 2 NADPH + 2 H(+). The protein operates within cofactor biosynthesis; tetrahydrobiopterin biosynthesis; tetrahydrobiopterin from biopterin: step 1/1. Exhibits a NADPH-dependent biopterin reductase activity. Has good activity with folate and significant activity with dihydrofolate and dihydrobiopterin, but not with quinonoid dihydrobiopterin. Confers resistance to methotrexate (MTX). The chain is Pteridine reductase 1 (PTR1) from Leishmania major.